Consider the following 557-residue polypeptide: MPERDSEPFSNPLAPDGHDVDDPHSFHQSKLTNEDFRKLLMTPRAAPTSAPPSKSRHHEMPREYNEDEDPAARRRKKKSYYAKLRQQEIERERELAEKYRDRAKERRDGVNKDYEETELISTTANYRAVGPTAEADKSAAEKRRQLIQESKFLGGDMEHTHLVKGLDFALLQKVRAEIASKEKEEEELMEKPQKETKKDEDPENKIEFKTRLGRNVYRMLFKSKAYERNELFLPGRMAYVVDLDDEYADTDIPTTLIRSKADCPTMEAQTTLTTNDIVISKLTQILSYLRQGTRNKKLKKKDKGKLEEKKPPEADMNIFEDIGDYVPSTTKTPRDKERERYRERERDRERDRDRDRERERERDRERERERDREREEEKKRHSYFEKPKVDDEPMDVDKGPGSTKELIKSINEKFAGSAGWEGTESLKKPEDKKQLGDFFGMSNSYAECYPATMDDMAVDSDEEVDYSKMDQGNKKGPLGRWDFDTQEEYSEYMNNKEALPKAAFQYGIKMSEGRKTRRFKETNDKAELDRQWKKISAIIEKRKKMEADGVEVKRPKY.

The disordered stretch occupies residues 1–84; the sequence is MPERDSEPFS…RKKKSYYAKL (84 aa). Residues 16–25 are compositionally biased toward basic and acidic residues; the sequence is DGHDVDDPHS. Positions 42–53 are enriched in low complexity; that stretch reads TPRAAPTSAPPS. N6-acetyllysine occurs at positions 98 and 137. Residue Lys151 forms a Glycyl lysine isopeptide (Lys-Gly) (interchain with G-Cter in SUMO2) linkage. Positions 181–205 are disordered; sequence KEKEEEELMEKPQKETKKDEDPENK. Ser287 carries the post-translational modification Phosphoserine. Residues 294–303 are compositionally biased toward basic residues; it reads RNKKLKKKDK. Residues 294–403 are disordered; the sequence is RNKKLKKKDK…MDVDKGPGST (110 aa). Basic and acidic residues predominate over residues 304–313; that stretch reads GKLEEKKPPE. Residues Lys310 and Lys331 each participate in a glycyl lysine isopeptide (Lys-Gly) (interchain with G-Cter in SUMO2) cross-link. A compositionally biased stretch (basic and acidic residues) spans 332–398; sequence TPRDKERERY…VDDEPMDVDK (67 aa). 17 tandem repeats follow at residues 342–343, 344–345, 346–347, 348–349, 350–351, 352–353, 354–355, 356–357, 358–359, 360–361, 362–363, 364–365, 366–367, 368–369, 370–371, 372–373, and 374–375. The segment at 342–375 is 17 X 2 AA tandem repeats of R-[ED]; sequence RERERDRERDRDRDRERERERDRERERERDRERE. Residues Lys386, Lys388, Lys404, and Lys408 each participate in a glycyl lysine isopeptide (Lys-Gly) (interchain with G-Cter in SUMO2) cross-link. Ser417 and Ser460 each carry phosphoserine. Thr485 carries the post-translational modification Phosphothreonine. Glycyl lysine isopeptide (Lys-Gly) (interchain with G-Cter in SUMO2) cross-links involve residues Lys496, Lys501, and Lys509. Phosphoserine is present on Ser536. Residues Lys541, Lys543, Lys544, and Lys553 each participate in a glycyl lysine isopeptide (Lys-Gly) (interchain with G-Cter in SUMO2) cross-link.

Belongs to the RED family. (Microbial infection) Identified in a complex with SMU1 and influenza A virus RNA polymerase subunits PB1 and PB2. Directly interacts with SMU1 and with influenza A virus RNA polymerase subunits PB1 and PB2. In terms of assembly, component of the spliceosome B complex. Interacts with SMU1. Interacts with MAD1L1. May interact with DHX15. In terms of tissue distribution, ubiquitous.

Its subcellular location is the nucleus. It is found in the nucleoplasm. It localises to the chromosome. The protein resides in the cytoplasm. The protein localises to the cytoskeleton. Its subcellular location is the spindle pole. Involved in pre-mRNA splicing as a component of the spliceosome. Auxiliary spliceosomal protein that regulates selection of alternative splice sites in a small set of target pre-mRNA species. Required for normal mitotic cell cycle progression. Recruits MAD1L1 and MAD2L1 to kinetochores, and is required to trigger the spindle assembly checkpoint. Required for normal accumulation of SMU1. Its function is as follows. (Microbial infection) Required, together with SMU1, for normal splicing of influenza A virus NS1 pre-mRNA, which is required for the production of the exportin NS2 and for the production of influenza A virus particles. Not required for the production of VSV virus particles. The polypeptide is Protein Red (IK) (Homo sapiens (Human)).